The sequence spans 282 residues: Bifunctional protein FolD (282 aa).

Residues 163-165 (NRS), Thr188, and Ile229 each bind NADP(+).

This sequence belongs to the tetrahydrofolate dehydrogenase/cyclohydrolase family. In terms of assembly, homodimer.

It catalyses the reaction (6R)-5,10-methylene-5,6,7,8-tetrahydrofolate + NADP(+) = (6R)-5,10-methenyltetrahydrofolate + NADPH. It carries out the reaction (6R)-5,10-methenyltetrahydrofolate + H2O = (6R)-10-formyltetrahydrofolate + H(+). The protein operates within one-carbon metabolism; tetrahydrofolate interconversion. In terms of biological role, catalyzes the oxidation of 5,10-methylenetetrahydrofolate to 5,10-methenyltetrahydrofolate and then the hydrolysis of 5,10-methenyltetrahydrofolate to 10-formyltetrahydrofolate. The chain is Bifunctional protein FolD from Malacoplasma penetrans (strain HF-2) (Mycoplasma penetrans).